The primary structure comprises 294 residues: DNA adenine methyltransferase YhdJ (294 aa).

The interval 275 to 294 is disordered; the sequence is TGNLSKRSRLSEVDPDLITK. Basic and acidic residues predominate over residues 283–294; that stretch reads RLSEVDPDLITK.

Belongs to the N(4)/N(6)-methyltransferase family.

The enzyme catalyses a 2'-deoxyadenosine in DNA + S-adenosyl-L-methionine = an N(6)-methyl-2'-deoxyadenosine in DNA + S-adenosyl-L-homocysteine + H(+). A beta subtype methylase, recognizes the double-stranded sequence 5'-ATGCAT-3' and methylates A-5. The sequence is that of DNA adenine methyltransferase YhdJ (yhdJ) from Escherichia coli (strain K12).